Reading from the N-terminus, the 36-residue chain is Protein YmgL (36 aa).

The chain is Protein YmgL from Escherichia coli (strain K12).